The following is a 422-amino-acid chain: Histidinol dehydrogenase (422 aa).

3 residues coordinate NAD(+): tyrosine 123, glutamine 183, and asparagine 206. The substrate site is built by serine 229, glutamine 251, and histidine 254. Residues glutamine 251 and histidine 254 each coordinate Zn(2+). Residues glutamate 320 and histidine 321 each act as proton acceptor in the active site. Substrate contacts are provided by histidine 321, aspartate 354, glutamate 408, and histidine 413. Zn(2+) is bound at residue aspartate 354. Residue histidine 413 coordinates Zn(2+).

This sequence belongs to the histidinol dehydrogenase family. Zn(2+) is required as a cofactor.

The catalysed reaction is L-histidinol + 2 NAD(+) + H2O = L-histidine + 2 NADH + 3 H(+). The protein operates within amino-acid biosynthesis; L-histidine biosynthesis; L-histidine from 5-phospho-alpha-D-ribose 1-diphosphate: step 9/9. Functionally, catalyzes the sequential NAD-dependent oxidations of L-histidinol to L-histidinaldehyde and then to L-histidine. The chain is Histidinol dehydrogenase from Haloarcula marismortui (strain ATCC 43049 / DSM 3752 / JCM 8966 / VKM B-1809) (Halobacterium marismortui).